The chain runs to 793 residues: Putative potassium transporter 8 (793 aa).

Residues 1–22 (MDLEFGRGMRSPQRDSWKTTLL) lie on the Cytoplasmic side of the membrane. A helical membrane pass occupies residues 23 to 43 (LAYQSLGVVYGDLSISPLYVF). Residues 44–59 (KSTFAEDIQHSETNEE) are Extracellular-facing. A helical membrane pass occupies residues 60–80 (IFGVLSFVFWTLTLIPLIKYV). The Cytoplasmic segment spans residues 81 to 151 (SIVLRADDNG…EKHKKLHTAL (71 aa)). The helical transmembrane segment at 152–172 (LIMVLIGTCMVIGDGVLTPAI) threads the bilayer. Residues 173 to 191 (SVFSAVSGLEFSLSKDHRE) are Extracellular-facing. Residues 192-212 (YAVIPITCVILAFLFALQHYG) traverse the membrane as a helical segment. Over 213–215 (THR) the chain is Cytoplasmic. A helical transmembrane segment spans residues 216–236 (VGFLFAPIVLAWLICMSALGL). Topologically, residues 237–264 (YNIIHWNPHVYQALNPCYMFKFLKKTRK) are extracellular. The helical transmembrane segment at 265-285 (YGWMSLGGILLCMTGSEAMFA) threads the bilayer. Over 286-292 (DLGHFSY) the chain is Cytoplasmic. Residues 293–313 (SAIQLAFTSLVYPALILAYMG) traverse the membrane as a helical segment. At 314–343 (QAAYLSKHHDFYSNSQVGFYIAVPDKVRWP) the chain is on the extracellular side. A helical membrane pass occupies residues 344–364 (VLVLAILASVVGSQAIISGTF). Topologically, residues 365–391 (SIINQSQSLSCFPRVKVVHTSDKIHGQ) are cytoplasmic. A helical transmembrane segment spans residues 392 to 412 (IYIPEINWLLMILCIAVTVGF). Topologically, residues 413 to 422 (RDTKHMGNAS) are extracellular. N420 is a glycosylation site (N-linked (GlcNAc...) asparagine). A helical transmembrane segment spans residues 423–443 (GLAVITVMLVTTCLTSLVIML). Topologically, residues 444–448 (CWRRP) are cytoplasmic. The chain crosses the membrane as a helical span at residues 449-469 (PVLALCFLLFFGSVEALYFSA). Topologically, residues 470–473 (SLIK) are extracellular. Residues 474 to 494 (FLEGAWLPILLALFLMAVMLV) form a helical membrane-spanning segment. Residues 495-793 (WHYTTIKKYE…LLEVGMVYVL (299 aa)) are Cytoplasmic-facing. A compositionally biased stretch (polar residues) spans 664 to 675 (DSVQHSSAASVE). The interval 664 to 698 (DSVQHSSAASVETTTTRRRSGGGDDDGSPGGGGGR) is disordered.

This sequence belongs to the HAK/KUP transporter (TC 2.A.72.3) family.

It is found in the membrane. In terms of biological role, high-affinity potassium transporter. The polypeptide is Putative potassium transporter 8 (HAK8) (Oryza sativa subsp. japonica (Rice)).